Reading from the N-terminus, the 56-residue chain is Small ribosomal subunit protein uS14 (56 aa).

Belongs to the universal ribosomal protein uS14 family. In terms of assembly, component of the small ribosomal subunit (SSU). Mature yeast ribosomes consist of a small (40S) and a large (60S) subunit. The 40S small subunit contains 1 molecule of ribosomal RNA (18S rRNA) and at least 33 different proteins. The large 60S subunit contains 3 rRNA molecules (25S, 5.8S and 5S rRNA) and at least 46 different proteins.

The protein localises to the cytoplasm. It is found in the nucleus. In terms of biological role, component of the ribosome, a large ribonucleoprotein complex responsible for the synthesis of proteins in the cell. The small ribosomal subunit (SSU) binds messenger RNAs (mRNAs) and translates the encoded message by selecting cognate aminoacyl-transfer RNA (tRNA) molecules. The large subunit (LSU) contains the ribosomal catalytic site termed the peptidyl transferase center (PTC), which catalyzes the formation of peptide bonds, thereby polymerizing the amino acids delivered by tRNAs into a polypeptide chain. The nascent polypeptides leave the ribosome through a tunnel in the LSU and interact with protein factors that function in enzymatic processing, targeting, and the membrane insertion of nascent chains at the exit of the ribosomal tunnel. This Schizosaccharomyces pombe (strain 972 / ATCC 24843) (Fission yeast) protein is Small ribosomal subunit protein uS14 (rps29).